The primary structure comprises 728 residues: Diacylglycerol kinase 1 (728 aa).

The chain crosses the membrane as a helical span at residues 27–48 (GLMFSCFVAALVGILTIAYTAF). 2 Phorbol-ester/DAG-type zinc fingers span residues 79-137 (PHSW…PKDC) and 149-212 (VHQW…GDIC). 2 disordered regions span residues 265 to 296 (KQTN…PTVN) and 308 to 336 (VMNG…TGSF). Over residues 267-294 (TNETSADTGNSGSNCDESTESTADTGPT) the composition is skewed to polar residues. Over residues 310-319 (NGDSSNGDSD) the composition is skewed to low complexity. The DAGKc domain occupies 357-496 (SDARPLLVFI…LDRWKVSILN (140 aa)). Glycyl lysine isopeptide (Lys-Gly) (interchain with G-Cter in ubiquitin) cross-links involve residues Lys-491 and Lys-500.

This sequence belongs to the eukaryotic diacylglycerol kinase family. In terms of assembly, monomer. Expressed in roots, shoots, and leaves.

The protein resides in the membrane. It carries out the reaction a 1,2-diacyl-sn-glycerol + ATP = a 1,2-diacyl-sn-glycero-3-phosphate + ADP + H(+). Its function is as follows. Phosphorylates the second messenger diacylglycerol (DAG) to generate phosphatidic acid (PA), another important signaling molecule. PA is required for plant development and responses to abiotic stress and pathogen attack. May be involved in the accumulation of PA during cold stress. The polypeptide is Diacylglycerol kinase 1 (DGK1) (Arabidopsis thaliana (Mouse-ear cress)).